Reading from the N-terminus, the 450-residue chain is Chromosomal replication initiator protein DnaA (450 aa).

The domain I, interacts with DnaA modulators stretch occupies residues 1–77 (MTENEQIFWN…EVYNAQIAVD (77 aa)). A domain II region spans residues 77–109 (DYVYEDDLMIEQQHQGQQGYTEQAFQQLPAVQS). Residues 110-328 (DLNPKYSFDN…GALKDISLVA (219 aa)) are domain III, AAA+ region. ATP-binding residues include Gly154, Gly156, Lys157, and Thr158. Residues 329–450 (NFKQIDTITV…EIETIKNKIK (122 aa)) form a domain IV, binds dsDNA region.

It belongs to the DnaA family. Oligomerizes as a right-handed, spiral filament on DNA at oriC.

Its subcellular location is the cytoplasm. Its function is as follows. Plays an essential role in the initiation and regulation of chromosomal replication. ATP-DnaA binds to the origin of replication (oriC) to initiate formation of the DNA replication initiation complex once per cell cycle. Binds the DnaA box (a 9 base pair repeat at the origin) and separates the double-stranded (ds)DNA. Forms a right-handed helical filament on oriC DNA; dsDNA binds to the exterior of the filament while single-stranded (ss)DNA is stabiized in the filament's interior. The ATP-DnaA-oriC complex binds and stabilizes one strand of the AT-rich DNA unwinding element (DUE), permitting loading of DNA polymerase. After initiation quickly degrades to an ADP-DnaA complex that is not apt for DNA replication. Binds acidic phospholipids. This chain is Chromosomal replication initiator protein DnaA, found in Streptococcus equi subsp. equi (strain 4047).